A 570-amino-acid chain; its full sequence is Protein HEATR9 (570 aa).

The protein is Protein HEATR9 (HEATR9) of Homo sapiens (Human).